The chain runs to 20 residues: Brevinin-1SPd (20 aa).

A disulfide bond links cysteine 14 and cysteine 20.

In terms of tissue distribution, expressed by the skin glands.

The protein localises to the secreted. Antimicrobial peptide with activity against Gram-negative and Gram-positive bacteria (MIC=13 uM against E.coli, MIC=3 uM against S.aureus) and fungi (MIC=3 uM against C.albicans). Shows hemolytic activity on human erythrocytes (HC(50)=8 uM). This is Brevinin-1SPd from Lithobates septentrionalis (Mink frog).